The primary structure comprises 150 residues: UPF0260 protein VIBHAR_03078 (150 aa).

This sequence belongs to the UPF0260 family.

This Vibrio campbellii (strain ATCC BAA-1116) protein is UPF0260 protein VIBHAR_03078.